Reading from the N-terminus, the 629-residue chain is tRNA uridine 5-carboxymethylaminomethyl modification enzyme MnmG (629 aa).

Residues 13 to 18 (GGGHAG), Val-125, and Ser-180 contribute to the FAD site. Position 273 to 287 (273 to 287 (GPRYCPSIEDKVMRF)) interacts with NAD(+). Gln-370 contributes to the FAD binding site.

This sequence belongs to the MnmG family. As to quaternary structure, homodimer. Heterotetramer of two MnmE and two MnmG subunits. FAD is required as a cofactor.

Its subcellular location is the cytoplasm. Functionally, NAD-binding protein involved in the addition of a carboxymethylaminomethyl (cmnm) group at the wobble position (U34) of certain tRNAs, forming tRNA-cmnm(5)s(2)U34. The chain is tRNA uridine 5-carboxymethylaminomethyl modification enzyme MnmG from Escherichia coli (strain SMS-3-5 / SECEC).